Here is a 354-residue protein sequence, read N- to C-terminus: 3-isopropylmalate dehydrogenase (354 aa).

76-87 (GPRWDGAKERPE) contributes to the NAD(+) binding site. The substrate site is built by Arg-94, Arg-104, Arg-130, and Asp-215. Mg(2+) is bound by residues Asp-215, Asp-239, and Asp-243. 273–285 (GSAPDIAGKNKAN) contributes to the NAD(+) binding site.

It belongs to the isocitrate and isopropylmalate dehydrogenases family. LeuB type 1 subfamily. In terms of assembly, homodimer. Mg(2+) is required as a cofactor. Mn(2+) serves as cofactor.

Its subcellular location is the cytoplasm. The enzyme catalyses (2R,3S)-3-isopropylmalate + NAD(+) = 4-methyl-2-oxopentanoate + CO2 + NADH. It participates in amino-acid biosynthesis; L-leucine biosynthesis; L-leucine from 3-methyl-2-oxobutanoate: step 3/4. Catalyzes the oxidation of 3-carboxy-2-hydroxy-4-methylpentanoate (3-isopropylmalate) to 3-carboxy-4-methyl-2-oxopentanoate. The product decarboxylates to 4-methyl-2 oxopentanoate. The polypeptide is 3-isopropylmalate dehydrogenase (Bacillus thuringiensis subsp. konkukian (strain 97-27)).